Reading from the N-terminus, the 72-residue chain is Translation initiation factor IF-1 (72 aa).

One can recognise an S1-like domain in the interval 1-72 (MIKEDNIEMH…SKGRIIFRSR (72 aa)).

It belongs to the IF-1 family. As to quaternary structure, component of the 30S ribosomal translation pre-initiation complex which assembles on the 30S ribosome in the order IF-2 and IF-3, IF-1 and N-formylmethionyl-tRNA(fMet); mRNA recruitment can occur at any time during PIC assembly.

It localises to the cytoplasm. In terms of biological role, one of the essential components for the initiation of protein synthesis. Stabilizes the binding of IF-2 and IF-3 on the 30S subunit to which N-formylmethionyl-tRNA(fMet) subsequently binds. Helps modulate mRNA selection, yielding the 30S pre-initiation complex (PIC). Upon addition of the 50S ribosomal subunit IF-1, IF-2 and IF-3 are released leaving the mature 70S translation initiation complex. The sequence is that of Translation initiation factor IF-1 from Blochmanniella floridana.